Here is an 882-residue protein sequence, read N- to C-terminus: Valine--tRNA ligase (882 aa).

The 'HIGH' region signature appears at Pro-45–His-55. Positions Lys-519–Ser-523 match the 'KMSKS' region motif. An ATP-binding site is contributed by Lys-522. The stretch at Leu-808–Lys-882 forms a coiled coil.

This sequence belongs to the class-I aminoacyl-tRNA synthetase family. ValS type 1 subfamily. Monomer.

It is found in the cytoplasm. The enzyme catalyses tRNA(Val) + L-valine + ATP = L-valyl-tRNA(Val) + AMP + diphosphate. Functionally, catalyzes the attachment of valine to tRNA(Val). As ValRS can inadvertently accommodate and process structurally similar amino acids such as threonine, to avoid such errors, it has a 'posttransfer' editing activity that hydrolyzes mischarged Thr-tRNA(Val) in a tRNA-dependent manner. This is Valine--tRNA ligase from Streptococcus pyogenes serotype M18 (strain MGAS8232).